The following is a 215-amino-acid chain: Imidazole glycerol phosphate synthase subunit HisH (215 aa).

One can recognise a Glutamine amidotransferase type-1 domain in the interval 7-215; that stretch reads TIAVIDYGMG…LLKNFVEWQP (209 aa). Catalysis depends on C86, which acts as the Nucleophile. Catalysis depends on residues H195 and E197.

Heterodimer of HisH and HisF.

It localises to the cytoplasm. It catalyses the reaction 5-[(5-phospho-1-deoxy-D-ribulos-1-ylimino)methylamino]-1-(5-phospho-beta-D-ribosyl)imidazole-4-carboxamide + L-glutamine = D-erythro-1-(imidazol-4-yl)glycerol 3-phosphate + 5-amino-1-(5-phospho-beta-D-ribosyl)imidazole-4-carboxamide + L-glutamate + H(+). It carries out the reaction L-glutamine + H2O = L-glutamate + NH4(+). It functions in the pathway amino-acid biosynthesis; L-histidine biosynthesis; L-histidine from 5-phospho-alpha-D-ribose 1-diphosphate: step 5/9. In terms of biological role, IGPS catalyzes the conversion of PRFAR and glutamine to IGP, AICAR and glutamate. The HisH subunit catalyzes the hydrolysis of glutamine to glutamate and ammonia as part of the synthesis of IGP and AICAR. The resulting ammonia molecule is channeled to the active site of HisF. This is Imidazole glycerol phosphate synthase subunit HisH from Dechloromonas aromatica (strain RCB).